The chain runs to 300 residues: (R)-3-hydroxydecanoyl-ACP:CoA transacylase (300 aa).

In terms of domain architecture, AB hydrolase-1 spans Thr-29–Ile-253.

It functions in the pathway polyester biosynthesis; polyhydroxyalkanoate biosynthesis. Functionally, catalyzes the transfer of the acyl moiety from in vitro synthesized 3-hydroxydecanoyl-CoA to acyl carrier protein. The sequence is that of (R)-3-hydroxydecanoyl-ACP:CoA transacylase (phaG) from Pseudomonas aeruginosa (strain ATCC 15692 / DSM 22644 / CIP 104116 / JCM 14847 / LMG 12228 / 1C / PRS 101 / PAO1).